The chain runs to 732 residues: Probable ATP-dependent RNA helicase DHX35 homolog (732 aa).

A disordered region spans residues 1 to 50 (MSYHPGHGHRQEPRKGAGARRGFARPDDSADAPRTGPLIFEERSTENAGA). A Helicase ATP-binding domain is found at 87–251 (LYMCERYRTI…FEMNETGNSD (165 aa)). 100-107 (GETGCGKS) lines the ATP pocket. The short motif at 198–201 (DEAH) is the DEAH box element. A Helicase C-terminal domain is found at 283–457 (AVDTVINIHK…STILQLKALG (175 aa)).

It belongs to the DEAD box helicase family. DEAH subfamily.

It catalyses the reaction ATP + H2O = ADP + phosphate + H(+). The protein is Probable ATP-dependent RNA helicase DHX35 homolog of Caenorhabditis elegans.